Here is a 308-residue protein sequence, read N- to C-terminus: 2-methylisocitrate lyase (308 aa).

51-53 is a binding site for substrate; sequence SGA. Residues Asp-90 and Asp-92 each contribute to the Mg(2+) site. Substrate is bound by residues 127-128, Arg-160, Glu-190, 212-214, Arg-243, and Arg-272; these read CG and NMT.

The protein belongs to the isocitrate lyase/PEP mutase superfamily. Methylisocitrate lyase family. As to quaternary structure, homotetramer; dimer of dimers. The cofactor is Mg(2+).

It catalyses the reaction (2S,3R)-3-hydroxybutane-1,2,3-tricarboxylate = pyruvate + succinate. It functions in the pathway organic acid metabolism; propanoate degradation. Its function is as follows. Involved in the catabolism of short chain fatty acids (SCFA) via the 2-methylcitrate cycle I (propionate degradation route). Catalyzes the thermodynamically favored C-C bond cleavage of (2R,3S)-2-methylisocitrate to yield pyruvate and succinate via an alpha-carboxy-carbanion intermediate. This is 2-methylisocitrate lyase from Aeropyrum pernix (strain ATCC 700893 / DSM 11879 / JCM 9820 / NBRC 100138 / K1).